Consider the following 347-residue polypeptide: MRVTKRDLKHNREGEISLTPETLDDLWHLKYIIEKGDLVFSLTKRKADNAADKLRPEKAEKKTVRLGVRVEDVEFHKFSNRLRVHGLIEHGMDAGFYHTLNIEDGTNLSITKYWKKDQLERVNEAEAASKRPKVILVAIEEGDADIGFVRHYGIEIYSHITQSSGKGEGTLREVFFSTILDQLTHAMSGTESVVVSGPGFTKDDFMKYASSKNSDLVAGILVEDTSSIGMSGFQEVLRRGAVDRIMEESRIARESSLMDSLLKEIALDGKVAYGMDEVKQAIDFGAVETLLVADEMLRLERESGNIDGLIQNVERSQGKMVVFSTEFEPGQRLHSLGGIAAILRFKV.

The protein belongs to the eukaryotic release factor 1 family. Pelota subfamily. As to quaternary structure, monomer. It depends on a divalent metal cation as a cofactor.

It localises to the cytoplasm. Functionally, may function in recognizing stalled ribosomes, interact with stem-loop structures in stalled mRNA molecules, and effect endonucleolytic cleavage of the mRNA. May play a role in the release non-functional ribosomes and degradation of damaged mRNAs. Has endoribonuclease activity. The polypeptide is Protein pelota homolog (Methanococcoides burtonii (strain DSM 6242 / NBRC 107633 / OCM 468 / ACE-M)).